A 214-amino-acid polypeptide reads, in one-letter code: MHDISSLTTRTKTLPPLRVGVGGPVGSGKTTLLEMVCKAMYPQFDLIAITNDIYTKEDQRLLTLSGALPPERILGVETGGCPHTAIREDASINLIAIDQMLEQFPDADIVFVESGGDNLAATFSPELSDLTLYIIDVASGEKIPRKGGPGITKSDLFIINKTDLAPYVGADLAVMEADTRRMRGDKPFVMCNLKTGDGLDQVIAFLKTEGLFRG.

A GTP-binding site is contributed by 23-30 (GPVGSGKT).

It belongs to the SIMIBI class G3E GTPase family. UreG subfamily. In terms of assembly, homodimer. UreD, UreF and UreG form a complex that acts as a GTP-hydrolysis-dependent molecular chaperone, activating the urease apoprotein by helping to assemble the nickel containing metallocenter of UreC. The UreE protein probably delivers the nickel.

It is found in the cytoplasm. Functionally, facilitates the functional incorporation of the urease nickel metallocenter. This process requires GTP hydrolysis, probably effectuated by UreG. In Bordetella bronchiseptica (strain ATCC BAA-588 / NCTC 13252 / RB50) (Alcaligenes bronchisepticus), this protein is Urease accessory protein UreG.